Reading from the N-terminus, the 177-residue chain is Large ribosomal subunit protein uL6 (177 aa).

This sequence belongs to the universal ribosomal protein uL6 family. In terms of assembly, part of the 50S ribosomal subunit.

This protein binds to the 23S rRNA, and is important in its secondary structure. It is located near the subunit interface in the base of the L7/L12 stalk, and near the tRNA binding site of the peptidyltransferase center. In Chromobacterium violaceum (strain ATCC 12472 / DSM 30191 / JCM 1249 / CCUG 213 / NBRC 12614 / NCIMB 9131 / NCTC 9757 / MK), this protein is Large ribosomal subunit protein uL6.